The chain runs to 768 residues: DNA topoisomerase 4 subunit A (768 aa).

The Topo IIA-type catalytic domain occupies 38–521 (LPEVSDGQKP…AGRAVLTQTA (484 aa)). Tyr126 acts as the O-(5'-phospho-DNA)-tyrosine intermediate in catalysis.

It belongs to the type II topoisomerase GyrA/ParC subunit family. ParC type 1 subfamily. As to quaternary structure, heterotetramer composed of ParC and ParE.

The protein localises to the cell membrane. The enzyme catalyses ATP-dependent breakage, passage and rejoining of double-stranded DNA.. Functionally, topoisomerase IV is essential for chromosome segregation. It relaxes supercoiled DNA. Performs the decatenation events required during the replication of a circular DNA molecule. In Neisseria gonorrhoeae, this protein is DNA topoisomerase 4 subunit A.